A 154-amino-acid chain; its full sequence is Protein X (154 aa).

A mitochondrial targeting sequence region spans residues 68 to 117 (PCALRFTSARRMETTVNAHQVLPKVLYKRTLGLSAMSTTDLEAYFKDCLF).

Belongs to the orthohepadnavirus protein X family. As to quaternary structure, may form homodimer. May interact with host CEBPA, CFLAR, CREB1, DDB1, E4F1, HBXIP, HSPD1/HSP60, NFKBIA, POLR2E and SMAD4. Interacts with host SMC5-SMC6 complex and induces its degradation. Interacts with host TRPC4AP; leading to prevent ubiquitination of TRPC4AP. Interacts with host PLSCR1; this interaction promotes ubiquitination and degradation of HBx and impairs HBx-mediated cell proliferation. A fraction may be phosphorylated in insect cells and HepG2 cells, a human hepatoblastoma cell line. Phosphorylated in vitro by host protein kinase C or mitogen-activated protein kinase. N-acetylated in insect cells.

It is found in the host cytoplasm. The protein resides in the host nucleus. It localises to the host mitochondrion. Multifunctional protein that plays a role in silencing host antiviral defenses and promoting viral transcription. Does not seem to be essential for HBV infection. May be directly involved in development of cirrhosis and liver cancer (hepatocellular carcinoma). Most of cytosolic activities involve modulation of cytosolic calcium. The effect on apoptosis is controversial depending on the cell types in which the studies have been conducted. May induce apoptosis by localizing in mitochondria and causing loss of mitochondrial membrane potential. May also modulate apoptosis by binding host CFLAR, a key regulator of the death-inducing signaling complex (DISC). Promotes viral transcription by using the host E3 ubiquitin ligase DDB1 to target the SMC5-SMC6 complex to proteasomal degradation. This host complex would otherwise bind to viral episomal DNA, and prevents its transcription. Moderately stimulates transcription of many different viral and cellular transcription elements. Promoters and enhancers stimulated by HBx contain DNA binding sites for NF-kappa-B, AP-1, AP-2, c-EBP, ATF/CREB, or the calcium-activated factor NF-AT. The polypeptide is Protein X (Homo sapiens (Human)).